Here is a 400-residue protein sequence, read N- to C-terminus: Enoyl-[acyl-carrier-protein] reductase [NADH] (400 aa).

NAD(+) is bound by residues 48-53, 74-75, 111-112, and 139-140; these read GASTGY, FE, DA, and LA. Tyr-225 contacts substrate. Tyr-235 serves as the catalytic Proton donor. NAD(+)-binding positions include Lys-244 and 273–275; that span reads VVT.

This sequence belongs to the TER reductase family. In terms of assembly, monomer.

The enzyme catalyses a 2,3-saturated acyl-[ACP] + NAD(+) = a (2E)-enoyl-[ACP] + NADH + H(+). The protein operates within lipid metabolism; fatty acid biosynthesis. Functionally, involved in the final reduction of the elongation cycle of fatty acid synthesis (FAS II). Catalyzes the reduction of a carbon-carbon double bond in an enoyl moiety that is covalently linked to an acyl carrier protein (ACP). The chain is Enoyl-[acyl-carrier-protein] reductase [NADH] from Burkholderia vietnamiensis (strain G4 / LMG 22486) (Burkholderia cepacia (strain R1808)).